Consider the following 388-residue polypeptide: Cobalt-precorrin-5B C(1)-methyltransferase (388 aa).

This sequence belongs to the CbiD family.

The catalysed reaction is Co-precorrin-5B + S-adenosyl-L-methionine = Co-precorrin-6A + S-adenosyl-L-homocysteine. The protein operates within cofactor biosynthesis; adenosylcobalamin biosynthesis; cob(II)yrinate a,c-diamide from sirohydrochlorin (anaerobic route): step 6/10. Functionally, catalyzes the methylation of C-1 in cobalt-precorrin-5B to form cobalt-precorrin-6A. The protein is Cobalt-precorrin-5B C(1)-methyltransferase of Rubrobacter xylanophilus (strain DSM 9941 / JCM 11954 / NBRC 16129 / PRD-1).